The chain runs to 575 residues: Membrane protein insertase YidC (575 aa).

6 helical membrane-spanning segments follow: residues 6–26 (VFLIFAWLMVAALLWMEWGKD), 357–377 (FSIMAIIGQGLFWVLSHLHSF), 381–401 (WGWAIIGLVLLLRLALYPLSA), 448–468 (GGCLPLLIQMPIFFALYWVLV), 490–510 (PYFILPVLNIAIMWATQKLTP), and 526–546 (PLVFGVMMAFMPAGLVLYWVV).

Belongs to the OXA1/ALB3/YidC family. Type 1 subfamily. As to quaternary structure, interacts with the Sec translocase complex via SecD. Specifically interacts with transmembrane segments of nascent integral membrane proteins during membrane integration.

It localises to the cell inner membrane. In terms of biological role, required for the insertion and/or proper folding and/or complex formation of integral membrane proteins into the membrane. Involved in integration of membrane proteins that insert both dependently and independently of the Sec translocase complex, as well as at least some lipoproteins. Aids folding of multispanning membrane proteins. In Xanthomonas campestris pv. campestris (strain B100), this protein is Membrane protein insertase YidC.